Consider the following 315-residue polypeptide: Methionyl-tRNA formyltransferase (315 aa).

113 to 116 contacts (6S)-5,6,7,8-tetrahydrofolate; sequence SILP.

It belongs to the Fmt family.

The enzyme catalyses L-methionyl-tRNA(fMet) + (6R)-10-formyltetrahydrofolate = N-formyl-L-methionyl-tRNA(fMet) + (6S)-5,6,7,8-tetrahydrofolate + H(+). In terms of biological role, attaches a formyl group to the free amino group of methionyl-tRNA(fMet). The formyl group appears to play a dual role in the initiator identity of N-formylmethionyl-tRNA by promoting its recognition by IF2 and preventing the misappropriation of this tRNA by the elongation apparatus. This is Methionyl-tRNA formyltransferase from Vibrio vulnificus (strain YJ016).